Consider the following 584-residue polypeptide: J protein JJJ2 (584 aa).

One can recognise a J domain in the interval 13–77; sequence TYYSILGLTS…DQKLRYDRDL (65 aa). The segment at 216-312 is disordered; the sequence is YSEDPNSCLG…FSSGSHDSNL (97 aa). Position 229 is a phosphoserine (S229). Low complexity predominate over residues 241–253; the sequence is QQQQQQQQQQQQQ. Residues 269–282 show a composition bias toward basic and acidic residues; it reads KDNKESKRESRVSP. Residues 299-312 show a composition bias toward polar residues; sequence KTSTFSSGSHDSNL.

Its subcellular location is the cytoplasm. The protein resides in the nucleus. This chain is J protein JJJ2 (JJJ2), found in Saccharomyces cerevisiae (strain YJM789) (Baker's yeast).